Here is a 100-residue protein sequence, read N- to C-terminus: Small ribosomal subunit protein uS14 (100 aa).

It belongs to the universal ribosomal protein uS14 family. Part of the 30S ribosomal subunit. Contacts proteins S3 and S10.

Its function is as follows. Binds 16S rRNA, required for the assembly of 30S particles and may also be responsible for determining the conformation of the 16S rRNA at the A site. In Gloeothece citriformis (strain PCC 7424) (Cyanothece sp. (strain PCC 7424)), this protein is Small ribosomal subunit protein uS14.